A 388-amino-acid polypeptide reads, in one-letter code: Na(+)/H(+) antiporter NhaA (388 aa).

The next 12 membrane-spanning stretches (helical) occupy residues 8–28, 33–53, 59–79, 95–115, 125–145, 154–174, 179–199, 217–237, 259–279, 287–307, 328–348, and 363–383; these read FLKL…IALI, PLQG…FAAL, LLLW…GLEV, LFPV…YLLF, GWAI…ALLS, VFLL…IALF, VSLV…WMNW, VCIL…GFLI, VAYL…LNGV, ILPL…IFLF, IFAV…ISGL, and LGIL…LRMV.

Belongs to the NhaA Na(+)/H(+) (TC 2.A.33) antiporter family.

The protein resides in the cell inner membrane. The enzyme catalyses Na(+)(in) + 2 H(+)(out) = Na(+)(out) + 2 H(+)(in). Na(+)/H(+) antiporter that extrudes sodium in exchange for external protons. The protein is Na(+)/H(+) antiporter NhaA of Photorhabdus laumondii subsp. laumondii (strain DSM 15139 / CIP 105565 / TT01) (Photorhabdus luminescens subsp. laumondii).